The following is a 116-amino-acid chain: Large ribosomal subunit protein P2 (116 aa).

Residues 60-116 (GKLSSMPSGGGVAAAAGGGGAAAGGGGAAPAAEEKKEEKKEESEEESDDDMGFGLFD) form a disordered region. Positions 67 to 87 (SGGGVAAAAGGGGAAAGGGGA) are enriched in gly residues. Residues 91 to 101 (AEEKKEEKKEE) are compositionally biased toward basic and acidic residues.

It belongs to the eukaryotic ribosomal protein P1/P2 family. In terms of assembly, P1 and P2 exist as dimers at the large ribosomal subunit. Phosphorylated.

Its function is as follows. Plays an important role in the elongation step of protein synthesis. This chain is Large ribosomal subunit protein P2, found in Branchiostoma floridae (Florida lancelet).